Consider the following 134-residue polypeptide: Ribosome-binding factor A (134 aa).

Belongs to the RbfA family. Monomer. Binds 30S ribosomal subunits, but not 50S ribosomal subunits or 70S ribosomes.

The protein localises to the cytoplasm. Its function is as follows. One of several proteins that assist in the late maturation steps of the functional core of the 30S ribosomal subunit. Associates with free 30S ribosomal subunits (but not with 30S subunits that are part of 70S ribosomes or polysomes). Required for efficient processing of 16S rRNA. May interact with the 5'-terminal helix region of 16S rRNA. The sequence is that of Ribosome-binding factor A from Sinorhizobium medicae (strain WSM419) (Ensifer medicae).